Consider the following 475-residue polypeptide: 3-isopropylmalate dehydratase large subunit (475 aa).

3 residues coordinate [4Fe-4S] cluster: C347, C407, and C410. The interval 418 to 442 (LAPGERSASTSNRNFEGRQGKGGRT) is disordered.

Belongs to the aconitase/IPM isomerase family. LeuC type 1 subfamily. As to quaternary structure, heterodimer of LeuC and LeuD. [4Fe-4S] cluster is required as a cofactor.

The catalysed reaction is (2R,3S)-3-isopropylmalate = (2S)-2-isopropylmalate. The protein operates within amino-acid biosynthesis; L-leucine biosynthesis; L-leucine from 3-methyl-2-oxobutanoate: step 2/4. Functionally, catalyzes the isomerization between 2-isopropylmalate and 3-isopropylmalate, via the formation of 2-isopropylmaleate. The sequence is that of 3-isopropylmalate dehydratase large subunit from Streptomyces griseus subsp. griseus (strain JCM 4626 / CBS 651.72 / NBRC 13350 / KCC S-0626 / ISP 5235).